Reading from the N-terminus, the 268-residue chain is Undecaprenyl-diphosphatase (268 aa).

A run of 8 helical transmembrane segments spans residues 8-28 (VILG…TGHL), 41-61 (AFWD…IVGL), 83-103 (FVIG…VAGK), 108-128 (VLFN…ILLW), 144-164 (FPLL…IPGV), 184-204 (AAEF…AYDF), 218-238 (IVAI…KTFL), and 246-266 (FVVF…ALAL).

The protein belongs to the UppP family.

Its subcellular location is the cell inner membrane. It carries out the reaction di-trans,octa-cis-undecaprenyl diphosphate + H2O = di-trans,octa-cis-undecaprenyl phosphate + phosphate + H(+). Catalyzes the dephosphorylation of undecaprenyl diphosphate (UPP). Confers resistance to bacitracin. In Bradyrhizobium diazoefficiens (strain JCM 10833 / BCRC 13528 / IAM 13628 / NBRC 14792 / USDA 110), this protein is Undecaprenyl-diphosphatase.